The primary structure comprises 612 residues: Peroxisomal carnitine O-octanoyltransferase (612 aa).

Met1 carries the post-translational modification N-acetylmethionine. Lys40 and Lys57 each carry N6-succinyllysine. The Proton acceptor role is filled by His327. CoA is bound by residues Lys406 and Lys410–Asp417. Lys406 bears the N6-acetyllysine; alternate mark. N6-succinyllysine; alternate is present on Lys406. Positions 439, 441, and 452 each coordinate (R)-carnitine. Positions Ala610 to Leu612 match the Microbody targeting signal motif.

This sequence belongs to the carnitine/choline acetyltransferase family. Liver.

It is found in the peroxisome. It carries out the reaction octanoyl-CoA + (R)-carnitine = O-octanoyl-(R)-carnitine + CoA. The catalysed reaction is 4,8-dimethylnonanoyl-CoA + (R)-carnitine = O-4,8-dimethylnonanoyl-(R)-carnitine + CoA. It functions in the pathway lipid metabolism; fatty acid beta-oxidation. In terms of biological role, beta-oxidation of fatty acids. The highest activity concerns the C6 to C10 chain length substrate. The chain is Peroxisomal carnitine O-octanoyltransferase (Crot) from Rattus norvegicus (Rat).